Here is a 376-residue protein sequence, read N- to C-terminus: 23S rRNA (uracil(747)-C(5))-methyltransferase RlmC (376 aa).

[4Fe-4S] cluster contacts are provided by Cys3, Cys11, Cys14, and Cys87. The S-adenosyl-L-methionine site is built by Gln212, Phe241, Glu262, and Asn307. Cys334 functions as the Nucleophile in the catalytic mechanism.

Belongs to the class I-like SAM-binding methyltransferase superfamily. RNA M5U methyltransferase family. RlmC subfamily.

The catalysed reaction is uridine(747) in 23S rRNA + S-adenosyl-L-methionine = 5-methyluridine(747) in 23S rRNA + S-adenosyl-L-homocysteine + H(+). In terms of biological role, catalyzes the formation of 5-methyl-uridine at position 747 (m5U747) in 23S rRNA. This Yersinia pestis bv. Antiqua (strain Antiqua) protein is 23S rRNA (uracil(747)-C(5))-methyltransferase RlmC.